A 394-amino-acid chain; its full sequence is 3-amino-4-hydroxybenzoate 2-monooxygenase (394 aa).

2 residues coordinate FAD: Ala16 and Arg109. Catalysis depends on Tyr214, which acts as the Proton acceptor. Asp287 provides a ligand contact to FAD.

The protein belongs to the 6-hydroxynicotinate 3-monooxygenase family. FAD is required as a cofactor.

The catalysed reaction is 3-amino-4-hydroxybenzoate + NADPH + O2 + H(+) = 3-amino-2,4-dihydroxybenzoate + NADP(+) + H2O. It functions in the pathway antibiotic biosynthesis. Its function is as follows. Part of a gene cluster involved in the biosynthesis of cremeomycin, a light-sensitive o-diazoquinone with antibacterial and antiproliferative effects. Catalyzes the hydroxylation of 3-amino-4-hydroxybenzoate (3,4-AHBA) to 3-amino-2,4-dihydroxybenzoate (3,2,4-ADHBA). This chain is 3-amino-4-hydroxybenzoate 2-monooxygenase, found in Streptomyces cremeus.